We begin with the raw amino-acid sequence, 273 residues long: Putative phosphoenolpyruvate synthase regulatory protein (273 aa).

154-161 (GVSRSGKT) contributes to the ADP binding site.

This sequence belongs to the pyruvate, phosphate/water dikinase regulatory protein family. PSRP subfamily.

It catalyses the reaction [pyruvate, water dikinase] + ADP = [pyruvate, water dikinase]-phosphate + AMP + H(+). The enzyme catalyses [pyruvate, water dikinase]-phosphate + phosphate + H(+) = [pyruvate, water dikinase] + diphosphate. Bifunctional serine/threonine kinase and phosphorylase involved in the regulation of the phosphoenolpyruvate synthase (PEPS) by catalyzing its phosphorylation/dephosphorylation. The chain is Putative phosphoenolpyruvate synthase regulatory protein from Halorhodospira halophila (strain DSM 244 / SL1) (Ectothiorhodospira halophila (strain DSM 244 / SL1)).